The primary structure comprises 392 residues: DNA replication and repair protein RecF (392 aa).

33–40 (GANGAGKT) is an ATP binding site.

The protein belongs to the RecF family.

The protein localises to the cytoplasm. Its function is as follows. The RecF protein is involved in DNA metabolism; it is required for DNA replication and normal SOS inducibility. RecF binds preferentially to single-stranded, linear DNA. It also seems to bind ATP. This is DNA replication and repair protein RecF from Caulobacter sp. (strain K31).